Reading from the N-terminus, the 398-residue chain is cAMP-dependent protein kinase type 3 (398 aa).

Phosphoserine is present on residues Ser15 and Ser55. The Protein kinase domain maps to 88 to 342 (FQILRTLGTG…SEDVKNHPWF (255 aa)). Residues 94-102 (LGTGSFGRV) and Lys117 each bind ATP. Asp211 functions as the Proton acceptor in the catalytic mechanism. In terms of domain architecture, AGC-kinase C-terminal spans 343 to 398 (NEVIWEKLLARYIETPYEPPIQQGQGDTSQFDRYPEEEFNYGIQGEDPYMDLMKEF).

The protein belongs to the protein kinase superfamily. AGC Ser/Thr protein kinase family. cAMP subfamily.

The catalysed reaction is L-seryl-[protein] + ATP = O-phospho-L-seryl-[protein] + ADP + H(+). The enzyme catalyses L-threonyl-[protein] + ATP = O-phospho-L-threonyl-[protein] + ADP + H(+). With respect to regulation, activated by cAMP. This chain is cAMP-dependent protein kinase type 3 (TPK3), found in Saccharomyces cerevisiae (strain ATCC 204508 / S288c) (Baker's yeast).